The primary structure comprises 409 residues: Probable aspartate/prephenate aminotransferase (409 aa).

Residues Gly39, Trp125, and Asn175 each coordinate L-aspartate. Lys239 is modified (N6-(pyridoxal phosphate)lysine). Arg375 contacts L-aspartate.

It belongs to the class-I pyridoxal-phosphate-dependent aminotransferase family. As to quaternary structure, homodimer. Pyridoxal 5'-phosphate serves as cofactor.

It is found in the cytoplasm. It carries out the reaction L-aspartate + 2-oxoglutarate = oxaloacetate + L-glutamate. It catalyses the reaction L-arogenate + 2-oxoglutarate = prephenate + L-glutamate. Its function is as follows. Catalyzes the reversible conversion of aspartate and 2-oxoglutarate to glutamate and oxaloacetate. Can also transaminate prephenate in the presence of glutamate. This Rickettsia felis (strain ATCC VR-1525 / URRWXCal2) (Rickettsia azadi) protein is Probable aspartate/prephenate aminotransferase (aatA).